The following is a 455-amino-acid chain: Nucleolar protein 12 (455 aa).

2 disordered regions span residues 1–104 (MSSF…ENEN) and 117–142 (QNEE…RTKA). Over residues 24–37 (NTRDGPVSKDELVK) the composition is skewed to basic and acidic residues. A compositionally biased stretch (polar residues) spans 51–66 (PKQQTNENESTLNQSA). Acidic residues predominate over residues 68–91 (ESDEEEEEYNDESNEGDDSDDAEQ). The span at 124–141 (SKESSEAKSSKVAEERTK) shows a compositional bias: basic and acidic residues. RRM domains follow at residues 160–258 (RTVF…HVSH) and 266–351 (RTIF…RAKS). 2 disordered regions span residues 333-402 (LETG…RSTV) and 420-455 (AIKG…MNKV). The segment covering 339–348 (KKGRKLRISR) has biased composition (basic residues). The span at 349–363 (AKSNAKPSLMSPNHF) shows a compositional bias: polar residues. Residues 425–438 (KGSKKGKKVKKPRI) show a composition bias toward basic residues. A compositionally biased stretch (basic and acidic residues) spans 439 to 455 (RERSTKFKEERKTMNKV).

It belongs to the RRM RBM34 family.

It localises to the nucleus. It is found in the nucleolus. Involved in pre-25S rRNA processing. This Candida albicans (strain SC5314 / ATCC MYA-2876) (Yeast) protein is Nucleolar protein 12 (NOP12).